Here is a 436-residue protein sequence, read N- to C-terminus: Trigger factor (436 aa).

The 86-residue stretch at G163–P248 folds into the PPIase FKBP-type domain.

Belongs to the FKBP-type PPIase family. Tig subfamily.

It localises to the cytoplasm. It catalyses the reaction [protein]-peptidylproline (omega=180) = [protein]-peptidylproline (omega=0). In terms of biological role, involved in protein export. Acts as a chaperone by maintaining the newly synthesized protein in an open conformation. Functions as a peptidyl-prolyl cis-trans isomerase. The protein is Trigger factor of Paracidovorax citrulli (strain AAC00-1) (Acidovorax citrulli).